A 215-amino-acid polypeptide reads, in one-letter code: Nucleoside triphosphate pyrophosphatase (215 aa).

It belongs to the Maf family. A divalent metal cation serves as cofactor.

The protein resides in the cytoplasm. It catalyses the reaction a ribonucleoside 5'-triphosphate + H2O = a ribonucleoside 5'-phosphate + diphosphate + H(+). The enzyme catalyses a 2'-deoxyribonucleoside 5'-triphosphate + H2O = a 2'-deoxyribonucleoside 5'-phosphate + diphosphate + H(+). Its function is as follows. Nucleoside triphosphate pyrophosphatase. May have a dual role in cell division arrest and in preventing the incorporation of modified nucleotides into cellular nucleic acids. In Rickettsia conorii (strain ATCC VR-613 / Malish 7), this protein is Nucleoside triphosphate pyrophosphatase.